Here is a 438-residue protein sequence, read N- to C-terminus: Anaerobic glycerol-3-phosphate dehydrogenase subunit B (438 aa).

Belongs to the anaerobic G-3-P dehydrogenase subunit B family. As to quaternary structure, composed of a catalytic GlpA/B dimer and of membrane bound GlpC. It depends on FMN as a cofactor.

The enzyme catalyses a quinone + sn-glycerol 3-phosphate = dihydroxyacetone phosphate + a quinol. It participates in polyol metabolism; glycerol degradation via glycerol kinase pathway; glycerone phosphate from sn-glycerol 3-phosphate (anaerobic route): step 1/1. Functionally, conversion of glycerol 3-phosphate to dihydroxyacetone. Uses fumarate or nitrate as electron acceptor. In Vibrio vulnificus (strain YJ016), this protein is Anaerobic glycerol-3-phosphate dehydrogenase subunit B.